Consider the following 598-residue polypeptide: Beta-fructofuranosidase, insoluble isoenzyme 2 (598 aa).

The N-terminal stretch at 1–25 (MGVLGSRVAWAWLVQLLLLQQLAGA) is a signal peptide. Asp-69 is a catalytic residue. Asn-164, Asn-189, and Asn-348 each carry an N-linked (GlcNAc...) asparagine glycan.

The protein belongs to the glycosyl hydrolase 32 family. Expressed in leaves and flowers. Weakly expressed in seeds. Expressed in growing roots, node and the rapidly elongating zone of the internode.

The protein localises to the secreted. It is found in the cell wall. The catalysed reaction is Hydrolysis of terminal non-reducing beta-D-fructofuranoside residues in beta-D-fructofuranosides.. Its function is as follows. Cell wall-associated invertase that cleaves sucrose into glucose and fructose and is required for assimilated carbon partitioning during early grain-filling. May be involved in sucrose unloaded in the ovular and stylar vascular tissues for the stimulation of starch synthesis in the developing endosperm during grain-filling. Sugar homeostasis mediated by CIN2/GIF1 plays an important role in constitutive and induced physical and chemical defense against pathogens. This chain is Beta-fructofuranosidase, insoluble isoenzyme 2 (CIN2), found in Oryza sativa subsp. japonica (Rice).